A 505-amino-acid chain; its full sequence is Ribose import ATP-binding protein RbsA (505 aa).

ABC transporter domains follow at residues 12–249 (LQMK…VGRK) and 259–504 (VKKG…VAFS). 44–51 (GENGAGKS) serves as a coordination point for ATP.

Belongs to the ABC transporter superfamily. Ribose importer (TC 3.A.1.2.1) family. As to quaternary structure, the complex is composed of an ATP-binding protein (RbsA), two transmembrane proteins (RbsC) and a solute-binding protein (RbsB).

It is found in the cell membrane. It catalyses the reaction D-ribose(out) + ATP + H2O = D-ribose(in) + ADP + phosphate + H(+). Functionally, part of the ABC transporter complex RbsABC involved in ribose import. Responsible for energy coupling to the transport system. This chain is Ribose import ATP-binding protein RbsA, found in Clostridium tetani (strain Massachusetts / E88).